A 305-amino-acid chain; its full sequence is UDP-3-O-acyl-N-acetylglucosamine deacetylase (305 aa).

Residues H79, H238, and D242 each coordinate Zn(2+). H265 serves as the catalytic Proton donor.

This sequence belongs to the LpxC family. The cofactor is Zn(2+).

It carries out the reaction a UDP-3-O-[(3R)-3-hydroxyacyl]-N-acetyl-alpha-D-glucosamine + H2O = a UDP-3-O-[(3R)-3-hydroxyacyl]-alpha-D-glucosamine + acetate. Its pathway is glycolipid biosynthesis; lipid IV(A) biosynthesis; lipid IV(A) from (3R)-3-hydroxytetradecanoyl-[acyl-carrier-protein] and UDP-N-acetyl-alpha-D-glucosamine: step 2/6. Functionally, catalyzes the hydrolysis of UDP-3-O-myristoyl-N-acetylglucosamine to form UDP-3-O-myristoylglucosamine and acetate, the committed step in lipid A biosynthesis. This Salmonella typhi protein is UDP-3-O-acyl-N-acetylglucosamine deacetylase.